The sequence spans 180 residues: Large ribosomal subunit protein uL10 (180 aa).

Positions S161 to E180 are disordered. A compositionally biased stretch (acidic residues) spans S166–E180.

The protein belongs to the universal ribosomal protein uL10 family. In terms of assembly, part of the ribosomal stalk of the 50S ribosomal subunit. The N-terminus interacts with L11 and the large rRNA to form the base of the stalk. The C-terminus forms an elongated spine to which L12 dimers bind in a sequential fashion forming a multimeric L10(L12)X complex.

Forms part of the ribosomal stalk, playing a central role in the interaction of the ribosome with GTP-bound translation factors. The protein is Large ribosomal subunit protein uL10 of Finegoldia magna (strain ATCC 29328 / DSM 20472 / WAL 2508) (Peptostreptococcus magnus).